We begin with the raw amino-acid sequence, 203 residues long: Probable chemoreceptor glutamine deamidase CheD (203 aa).

The protein belongs to the CheD family.

The enzyme catalyses L-glutaminyl-[protein] + H2O = L-glutamyl-[protein] + NH4(+). Its function is as follows. Probably deamidates glutamine residues to glutamate on methyl-accepting chemotaxis receptors (MCPs), playing an important role in chemotaxis. The polypeptide is Probable chemoreceptor glutamine deamidase CheD (Janthinobacterium sp. (strain Marseille) (Minibacterium massiliensis)).